A 669-amino-acid chain; its full sequence is Armadillo repeat-containing protein gudu (669 aa).

Residues 1–10 (MIGTSSGTSH) show a composition bias toward polar residues. A disordered region spans residues 1–53 (MIGTSSGTSHNRSRKKKEQCGSCPNRFSKDKRQVAAEDSDTTEVESSTDEEER). Residues 37-51 (EDSDTTEVESSTDEE) show a composition bias toward acidic residues. ARM repeat units lie at residues 100–139 (QINQ…DITL), 141–180 (IDIR…NVCK), 240–279 (KHNM…KCSS), 281–320 (PKFQ…KCAF), 322–365 (GTTR…MCAV), 367–406 (DANV…ECVR), 408–447 (QSNR…ECAE), 492–531 (DSAE…TIAQ), 574–613 (GNNT…KLSM), and 615–654 (PQNC…NIRE).

Highly expressed in testis.

Its function is as follows. Important for spermatogenesis where it may have a role in sperm individualization. The chain is Armadillo repeat-containing protein gudu from Drosophila melanogaster (Fruit fly).